The primary structure comprises 57 residues: Protein YnaL (57 aa).

The disordered stretch occupies residues 7–57; the sequence is LQIPVPEPIPGDPVPVPDPIPRPQPMPDPPPDEEPIKLSHRERRSARIRAC. Positions 11–35 are enriched in pro residues; it reads VPEPIPGDPVPVPDPIPRPQPMPDP. Residues 46-57 are compositionally biased toward basic residues; sequence HRERRSARIRAC.

This Escherichia coli (strain K12) protein is Protein YnaL.